An 836-amino-acid chain; its full sequence is MSLSHLYRDGEGHMDDDEDERENFEITDWDLQNEFNPNRQRHWQTKEEATYGVWAERDSDEERPSFGGKRARDYSAPVNFISAGLKKGAAEEAELEDSDDEEKPVKQDEFPKDFGPKKLKTGGNFKPSQKGFAGGTKSFMDFGSWERHTKGIGQKLLQKMGYVPGRGLGKNAQGIINPIEAKQRKGKGAVGAYGSERTTQSLQDFPVVDSEEEAEEEFQKELSQWRKDPSGSKKKPKYSYKTVEELKAKGRISKKLSAPQKEISQVKVIDMTGREQKVYYSYSQISHKHNVPDDGLPLQSQLPQPGKEAKAPGFALPELEHNLQLLIELTEQEIIQNDRQLQYERDMVVNLSHELEKMAEVLEHEERVISNLSKVLEMVEECERRLQPGCSNPLTLDECARIFETLQDKYYEEYRMSDRVDLAVAIVYPLMKDYFKEWDPLKDCTYGTEIISKWKSLLENDQLLSHGGQDLSADAFHRLIWEVWMPFVRNIVTQWQPRNCDPMVDFLDSWVHIIPVWILDNILDQLVFPKLQKEVENWNPLTDTVPIHSWIHPWLPLMQARLEPLYSPIRSKLASALQKWHPSDSSAKLILQPWKDVFTPGSWEAFMVKNIVPKLGMCLGELVINPHQQHMDAFYWVIDWEGMISVSSLVGLLEKHFFPKWLQVLCSWLSNSPNYEEITKWYLGWKSMFSDQVLAHPSVKDKFNEALDIMNRAVSSNVGAYMQPGARENIAYLTHTERRKDFQYEAMQERREAENMAQRGIGVAASSVPMNFKDLIETKAEEHNIVFMPVIGKRHEGKQLYTFGRIVIYIDRGVVFVQGEKTWVPTSLQSLIDMAK.

Basic and acidic residues predominate over residues 1–13; the sequence is MSLSHLYRDGEGH. 3 disordered regions span residues 1 to 31, 54 to 73, and 85 to 136; these read MSLSHLYRDGEGHMDDDEDERENFEITDWDL, WAERDSDEERPSFGGKRARD, and LKKG…AGGT. The segment at 1–50 is required for interaction with DHX15; it reads MSLSHLYRDGEGHMDDDEDERENFEITDWDLQNEFNPNRQRHWQTKEEAT. A Phosphoserine modification is found at serine 2. Over residues 14 to 28 the composition is skewed to acidic residues; it reads MDDDEDERENFEITD. Residues 54 to 64 show a composition bias toward basic and acidic residues; the sequence is WAERDSDEERP. 2 positions are modified to phosphoserine: serine 59 and serine 98. Positions 91–102 are enriched in acidic residues; sequence EEAELEDSDDEE. Residues 103–116 are compositionally biased toward basic and acidic residues; that stretch reads KPVKQDEFPKDFGP. Serine 144 bears the Phosphoserine mark. The G-patch domain maps to 149–195; sequence TKGIGQKLLQKMGYVPGRGLGKNAQGIINPIEAKQRKGKGAVGAYGS. The interval 183-236 is disordered; the sequence is QRKGKGAVGAYGSERTTQSLQDFPVVDSEEEAEEEFQKELSQWRKDPSGSKKKP. Serine 210 carries the phosphoserine modification. Over residues 217 to 231 the composition is skewed to basic and acidic residues; it reads EFQKELSQWRKDPSG. Residues 699-704 carry the Nuclear localization signal motif; sequence VKDKFN. Positions 709–733 are required for nuclear speckle localization; sequence IMNRAVSSNVGAYMQPGARENIAYL.

The protein belongs to the TFP11/STIP family. As to quaternary structure, identified in the spliceosome C complex. Found in the Intron Large (IL) complex, a post-mRNA release spliceosomal complex containing the excised intron, U2, U5 and U6 snRNPs, and splicing factors. Interacts with TUFT1. Interacts with DHX15; indicative for a recruitment of DHX15 to the IL complex. Interacts with GCFC2.

The protein localises to the cytoplasm. The protein resides in the nucleus. In terms of biological role, involved in pre-mRNA splicing, specifically in spliceosome disassembly during late-stage splicing events. Intron turnover seems to proceed through reactions in two lariat-intron associated complexes termed Intron Large (IL) and Intron Small (IS). In cooperation with DHX15 seems to mediate the transition of the U2, U5 and U6 snRNP-containing IL complex to the snRNP-free IS complex leading to efficient debranching and turnover of excised introns. May play a role in the differentiation of ameloblasts and odontoblasts or in the forming of the enamel extracellular matrix. In Sus scrofa (Pig), this protein is Tuftelin-interacting protein 11 (TFIP11).